We begin with the raw amino-acid sequence, 288 residues long: MWKHVSQVLADQFGAYYSIKHKEKIHTGEMHEAWIIDDGIQPVFLKVNDKTFRSMFRAEADQLLLLAKTNTINVPNVYTVGCSHTHSFLLLEALPLDKTNPVDAMGKFGEQLAKLHLIKGADNYGLDFDTWLGPEYQPNGWKENWATFFSEQRIGWQLQICREKNLVFGDIEVLVKKVAELLAKHKPQPALLHGNLWIENCATVKQEIFTYDPACYWGDRECDLAFSELFEPFPRQFYESYDRTYPIDEGYPERKAIYQLYYLLNFSHRFNKHYVELTKKFIHDILSR.

92-94 (EAL) is a binding site for ATP.

It belongs to the fructosamine kinase family.

In terms of biological role, ketoamine kinase that phosphorylates ketoamines on the third carbon of the sugar moiety to generate ketoamine 3-phosphate. This chain is Probable ketoamine kinase PM0587, found in Pasteurella multocida (strain Pm70).